The chain runs to 271 residues: Tryptophan synthase alpha chain (271 aa).

Residues E49 and D60 each act as proton acceptor in the active site.

This sequence belongs to the TrpA family. Tetramer of two alpha and two beta chains.

The catalysed reaction is (1S,2R)-1-C-(indol-3-yl)glycerol 3-phosphate + L-serine = D-glyceraldehyde 3-phosphate + L-tryptophan + H2O. The protein operates within amino-acid biosynthesis; L-tryptophan biosynthesis; L-tryptophan from chorismate: step 5/5. In terms of biological role, the alpha subunit is responsible for the aldol cleavage of indoleglycerol phosphate to indole and glyceraldehyde 3-phosphate. This chain is Tryptophan synthase alpha chain, found in Burkholderia mallei (strain NCTC 10247).